A 150-amino-acid chain; its full sequence is NADH-quinone oxidoreductase subunit A (150 aa).

3 consecutive transmembrane segments (helical) span residues 14–34, 66–86, and 96–116; these read FAVF…GAFF, FYLV…LYAW, and IGFI…VYLV.

The protein belongs to the complex I subunit 3 family. NDH-1 is composed of 13 different subunits. Subunits NuoA, H, J, K, L, M, N constitute the membrane sector of the complex.

The protein localises to the cell inner membrane. It catalyses the reaction a quinone + NADH + 5 H(+)(in) = a quinol + NAD(+) + 4 H(+)(out). NDH-1 shuttles electrons from NADH, via FMN and iron-sulfur (Fe-S) centers, to quinones in the respiratory chain. The immediate electron acceptor for the enzyme in this species is believed to be ubiquinone. Couples the redox reaction to proton translocation (for every two electrons transferred, four hydrogen ions are translocated across the cytoplasmic membrane), and thus conserves the redox energy in a proton gradient. In Yersinia enterocolitica serotype O:8 / biotype 1B (strain NCTC 13174 / 8081), this protein is NADH-quinone oxidoreductase subunit A.